We begin with the raw amino-acid sequence, 133 residues long: Ribosome-binding factor A (133 aa).

It belongs to the RbfA family. In terms of assembly, monomer. Binds 30S ribosomal subunits, but not 50S ribosomal subunits or 70S ribosomes.

It localises to the cytoplasm. Functionally, one of several proteins that assist in the late maturation steps of the functional core of the 30S ribosomal subunit. Associates with free 30S ribosomal subunits (but not with 30S subunits that are part of 70S ribosomes or polysomes). Required for efficient processing of 16S rRNA. May interact with the 5'-terminal helix region of 16S rRNA. In Acinetobacter baumannii (strain ACICU), this protein is Ribosome-binding factor A.